The following is a 390-amino-acid chain: MAPSVKDQVEPQHAKILAIGTANPPNVYYQEDYPDFLFRVTKNEHRTDLREKFDRICEKSRTRKRYLYLTEEILKANPCIYTYGAPSLDVRQDMLNPEVPKLGQEAALKAIKEWGQPISKITHLIFCTASCVDMPGADFQLVKLLGLNPSVTRTMIYEAGCYAGATVLRLAKDFAENNEGARVLVVCAEITTVFFHGLTDTHLDILVGQALFADGASAVIVGANPEPEIESPLFEIVACRQTIIPNSEHGVVANIREMGFNYYLSGEVPKFVGGNVVDFLTKTFEKVDGKNKDWNSLFFSVHPGGPAIVDQVEEQLGLKEGKLRATRHVLSEYGNMGAPSVHFILDEMRKKSIEEGKATTGEGLEWGVVIGIGPGLTVETAVLRSEFITC.

The active site involves Cys161.

This sequence belongs to the thiolase-like superfamily. Chalcone/stilbene synthases family. Homodimer.

The enzyme catalyses 2-hydroxybenzoyl-CoA + malonyl-CoA = 4-hydroxycoumarin + CO2 + 2 CoA. Its function is as follows. Type III polyketide synthase involved preferentially in the biosynthesis of 4-hydroxycoumarin from salicoyl-CoA. Can also use benzoyl-CoA and malonyl-CoA to produce 3,5-dihydroxybiphenyl as a major product and benzoyldiacetic acid lactone as a minor side product. Can also use m-hydroxybenzoyl-CoA as substrate, producing m-hydroxybenzoyl diacetic acid lactone as a derailment product. No activity with p-hydroxybenzoyl-CoA, CoA-linked cinnamic acids or acetyl-CoA. The protein is 4-hydroxycoumarin synthase 1 (BIS2) of Sorbus aucuparia (European mountain ash).